Here is a 266-residue protein sequence, read N- to C-terminus: Glucosamine-6-phosphate deaminase (266 aa).

Asp-72 acts as the Proton acceptor; for enolization step in catalysis. Asp-141 serves as the catalytic For ring-opening step. The active-site Proton acceptor; for ring-opening step is the His-143. The For ring-opening step role is filled by Glu-148.

This sequence belongs to the glucosamine/galactosamine-6-phosphate isomerase family. NagB subfamily. In terms of assembly, homohexamer.

It carries out the reaction alpha-D-glucosamine 6-phosphate + H2O = beta-D-fructose 6-phosphate + NH4(+). Its pathway is amino-sugar metabolism; N-acetylneuraminate degradation; D-fructose 6-phosphate from N-acetylneuraminate: step 5/5. With respect to regulation, allosterically activated by N-acetylglucosamine 6-phosphate (GlcNAc6P). Functionally, catalyzes the reversible isomerization-deamination of glucosamine 6-phosphate (GlcN6P) to form fructose 6-phosphate (Fru6P) and ammonium ion. In Aeromonas hydrophila subsp. hydrophila (strain ATCC 7966 / DSM 30187 / BCRC 13018 / CCUG 14551 / JCM 1027 / KCTC 2358 / NCIMB 9240 / NCTC 8049), this protein is Glucosamine-6-phosphate deaminase.